The sequence spans 411 residues: MATINDNYLKLKAGYLFPEIARRVKTFAEANPDAKIIKLGIGDVTEPLPEACRTAMIKAIEDMGDRGTFKGYGPEQGYEWLREKIATHDFQARNCDVDASEIFVSDGAKCDTGNILDIFGKNNKIAVTDPVYPVYVDTNVMAGHTGEVNDKGEYEGLVYLPINAENNFIAEIPSQKVDIIYLCFPNNPTGATATKDYLKNWVDYAKANGSIIFFDAAYEAFITDSSLPHSIYEIEGARDCAIEFRSFSKNAGFTGTRCALTVVPKTLTAKASDGSDVELWKLWNRRQSTKFNGVSYIVQRGAEAVYSEAGKAQVQALISFYLENAQIICDKLKGAGFEVYGGVNAPYIWLKTPHNLSSWDFFDKLLQTANVVGTPGSGFGAAGEGYFRISAFNSRENVLEAMKRITSQFHL.

Residues Tyr-15 and Gly-42 each contribute to the substrate site. Pyridoxal 5'-phosphate-binding positions include Tyr-72, 108-109 (AK), Tyr-132, Asn-187, Tyr-218, and 246-248 (SFS). Substrate-binding residues include Lys-109, Tyr-132, and Asn-187. Position 249 is an N6-(pyridoxal phosphate)lysine (Lys-249). Positions 257 and 292 each coordinate pyridoxal 5'-phosphate. Asn-292 and Arg-388 together coordinate substrate.

The protein belongs to the class-I pyridoxal-phosphate-dependent aminotransferase family. LL-diaminopimelate aminotransferase subfamily. In terms of assembly, homodimer. It depends on pyridoxal 5'-phosphate as a cofactor.

It carries out the reaction (2S,6S)-2,6-diaminopimelate + 2-oxoglutarate = (S)-2,3,4,5-tetrahydrodipicolinate + L-glutamate + H2O + H(+). It participates in amino-acid biosynthesis; L-lysine biosynthesis via DAP pathway; LL-2,6-diaminopimelate from (S)-tetrahydrodipicolinate (aminotransferase route): step 1/1. Involved in the synthesis of meso-diaminopimelate (m-DAP or DL-DAP), required for both lysine and peptidoglycan biosynthesis. Catalyzes the direct conversion of tetrahydrodipicolinate to LL-diaminopimelate. The sequence is that of LL-diaminopimelate aminotransferase from Rippkaea orientalis (strain PCC 8801 / RF-1) (Cyanothece sp. (strain PCC 8801)).